The sequence spans 250 residues: Anamorsin homolog 1 (250 aa).

The segment at 1 to 104 (MNLKITINQQ…KKLNIPQQEF (104 aa)) is N-terminal SAM-like domain. The segment at 104–149 (FNNCYGKYDYIEQKFQNQINFFKQVDINGKQEIIDENELLDDGVQV) is linker. Positions 155, 162, 165, and 167 each coordinate [2Fe-2S] cluster. The interval 155-167 (CASKPRACANCTC) is fe-S binding site A. The [4Fe-4S] cluster site is built by Cys-193, Cys-196, Cys-204, and Cys-207. 2 consecutive short sequence motifs (cx2C motif) follow at residues 193–196 (CGSC) and 204–207 (CANC). Residues 193 to 207 (CGSCYLGDAFRCANC) are fe-S binding site B.

The protein belongs to the anamorsin family. As to quaternary structure, monomer. The cofactor is [2Fe-2S] cluster. [4Fe-4S] cluster serves as cofactor.

The protein resides in the cytoplasm. It localises to the mitochondrion intermembrane space. Component of the cytosolic iron-sulfur (Fe-S) protein assembly (CIA) machinery. Required for the maturation of extramitochondrial Fe-S proteins. Part of an electron transfer chain functioning in an early step of cytosolic Fe-S biogenesis, facilitating the de novo assembly of a [4Fe-4S] cluster on the cytosolic Fe-S scaffold complex. Electrons are transferred from NADPH via a FAD- and FMN-containing diflavin oxidoreductase. Together with the diflavin oxidoreductase, also required for the assembly of the diferric tyrosyl radical cofactor of ribonucleotide reductase (RNR), probably by providing electrons for reduction during radical cofactor maturation in the catalytic small subunit. This Paramecium tetraurelia protein is Anamorsin homolog 1.